We begin with the raw amino-acid sequence, 543 residues long: Chaperonin GroEL 7 (543 aa).

ATP-binding positions include 30 to 33 (TLGP), Lys51, 87 to 91 (DGTTT), Gly415, and Asp496.

Belongs to the chaperonin (HSP60) family. Forms a cylinder of 14 subunits composed of two heptameric rings stacked back-to-back. Interacts with the co-chaperonin GroES.

It is found in the cytoplasm. The catalysed reaction is ATP + H2O + a folded polypeptide = ADP + phosphate + an unfolded polypeptide.. Its function is as follows. Together with its co-chaperonin GroES, plays an essential role in assisting protein folding. The GroEL-GroES system forms a nano-cage that allows encapsulation of the non-native substrate proteins and provides a physical environment optimized to promote and accelerate protein folding. The polypeptide is Chaperonin GroEL 7 (Bradyrhizobium diazoefficiens (strain JCM 10833 / BCRC 13528 / IAM 13628 / NBRC 14792 / USDA 110)).